Reading from the N-terminus, the 885-residue chain is MNGSPYSSSSWVKSSLSTNSLGSLSNSYAAGSAGGSGNRSTVRGDSNKDQKLLGYLQKQSKSQLPNSNVKIFKKKWFWFESDSGTLFYSATSTGALSTPLTPSSLSENIKSIKITSQTTIEQSISFRLELIIKDKVPNDEFTVLNWVNTLNQWKKLNCNLDFTNDTTTTTNNSNNSNSNNNNKQYNSIENPDYLGKFGEVEGLLNAMSVSTSLNTMKTVKPLINKIQNDSEQLKLVLSQVEQQIEFLKSCQLELISHLSNDNNNNNNNNNNNNNILQILQQQQPISSKRTVSNDNLVGSNNSNNQLSLSIGLPINLNTSNTTTTTITNNTIEGENDDDEEEDEINQTSDIFSLLPTHLTLYVFSYLEPKELLILAQVSSQWQKLAGDNLLWVRFVTHFITPASIFDKSHNWKSVYLANTVTSLGYCSNYYYLKNQQKGGICTNKEKYMNRAISMYGVTPLTSLSSSKEGWLYKRGDDLLRIWKKRYFVLRDSSLFYFKHQNDNFPCGVILLNHGTKLKRASASTRKNCFKILQSKNSTITMVHKKRMPYYLSTDKEDDCNDWMILLNSIIKSNTQHQNNYGVITISGTSNNNNNNVYINNNNNNNNNNNNNNNNNNNNNNNNGSQSYNLPPLLSKSPSFSNALTSSTGISGGGGGSTKSRKSHKKSFSSGGGGSGGNNNFEQMQQQIQSVHLTPIYPMFGVALSKILENQSLITTQTHLKIPFILYICLNYIISKGIKEEGIFRVSGSLREVQELQEHFEQGREIDLDQHDIHAICGLVKTFFRKLPHTLVAADLDEYSTSVQLAASQTEDEKIQEFKFIFESISENSFHIFELLLYCLRLIVRNESFNKMTIENLLIVIMPTLKCSPVLITNGIKYYDEIFIKK.

Residues 168-182 (TTTNNSNNSNSNNNN) show a composition bias toward low complexity. A disordered region spans residues 168–187 (TTTNNSNNSNSNNNNKQYNS). A coiled-coil region spans residues 222–249 (LINKIQNDSEQLKLVLSQVEQQIEFLKS). The region spanning 348-394 (SDIFSLLPTHLTLYVFSYLEPKELLILAQVSSQWQKLAGDNLLWVRF) is the F-box domain. The PH domain maps to 464–571 (SSSKEGWLYK…WMILLNSIIK (108 aa)). Low complexity-rich tracts occupy residues 594-622 (NNVYINNNNNNNNNNNNNNNNNNNNNNNN) and 629-648 (LPPLLSKSPSFSNALTSSTG). Residues 594–680 (NNVYINNNNN…GGGSGGNNNF (87 aa)) form a disordered region. Residues 701-885 (VALSKILENQ…KYYDEIFIKK (185 aa)) enclose the Rho-GAP domain.

The protein resides in the cytoplasm. Its function is as follows. Rho GTPase-activating protein involved in the signal transduction pathway. The chain is Rho GTPase-activating protein gacFF (gacFF) from Dictyostelium discoideum (Social amoeba).